Here is a 185-residue protein sequence, read N- to C-terminus: Ribosome-recycling factor (185 aa).

This sequence belongs to the RRF family.

The protein resides in the cytoplasm. Responsible for the release of ribosomes from messenger RNA at the termination of protein biosynthesis. May increase the efficiency of translation by recycling ribosomes from one round of translation to another. This is Ribosome-recycling factor from Symbiobacterium thermophilum (strain DSM 24528 / JCM 14929 / IAM 14863 / T).